The chain runs to 659 residues: Threonine--tRNA ligase (659 aa).

In terms of domain architecture, TGS spans 1 to 61 (MIDLIFPDGS…TPDLLGGGNR (61 aa)). A catalytic region spans residues 249 to 541 (DHRKLGKTMD…LLENYAGHLP (293 aa)). Zn(2+) contacts are provided by Cys-341, His-392, and His-518. The interval 637–659 (EEATPPDLARDRAVAAPAELAQA) is disordered.

The protein belongs to the class-II aminoacyl-tRNA synthetase family. Homodimer. It depends on Zn(2+) as a cofactor.

It is found in the cytoplasm. It catalyses the reaction tRNA(Thr) + L-threonine + ATP = L-threonyl-tRNA(Thr) + AMP + diphosphate + H(+). Its function is as follows. Catalyzes the attachment of threonine to tRNA(Thr) in a two-step reaction: L-threonine is first activated by ATP to form Thr-AMP and then transferred to the acceptor end of tRNA(Thr). Also edits incorrectly charged L-seryl-tRNA(Thr). The polypeptide is Threonine--tRNA ligase (Caulobacter sp. (strain K31)).